The sequence spans 136 residues: Nucleoside diphosphate kinase (136 aa).

6 residues coordinate ATP: lysine 10, phenylalanine 58, arginine 86, threonine 92, arginine 104, and asparagine 114. The active-site Pros-phosphohistidine intermediate is the histidine 117.

The protein belongs to the NDK family. As to quaternary structure, homotetramer. Mg(2+) is required as a cofactor.

The protein localises to the cytoplasm. The catalysed reaction is a 2'-deoxyribonucleoside 5'-diphosphate + ATP = a 2'-deoxyribonucleoside 5'-triphosphate + ADP. It carries out the reaction a ribonucleoside 5'-diphosphate + ATP = a ribonucleoside 5'-triphosphate + ADP. Its function is as follows. Major role in the synthesis of nucleoside triphosphates other than ATP. The ATP gamma phosphate is transferred to the NDP beta phosphate via a ping-pong mechanism, using a phosphorylated active-site intermediate. In Mycobacterium ulcerans (strain Agy99), this protein is Nucleoside diphosphate kinase.